A 90-amino-acid polypeptide reads, in one-letter code: Cuticle protein 9.5 (90 aa).

In terms of biological role, component of the cuticle of migratory locust which contains more than 100 different structural proteins. This chain is Cuticle protein 9.5, found in Locusta migratoria (Migratory locust).